The following is a 505-amino-acid chain: Putative ribose/galactose/methyl galactoside import ATP-binding protein 1 (505 aa).

2 consecutive ABC transporter domains span residues 10 to 245 (LRLE…VGRS) and 256 to 501 (RPTD…SGYG). 42 to 49 (GENGAGKS) contributes to the ATP binding site.

This sequence belongs to the ABC transporter superfamily. Carbohydrate importer 2 (CUT2) (TC 3.A.1.2) family.

Its subcellular location is the cell inner membrane. It carries out the reaction D-ribose(out) + ATP + H2O = D-ribose(in) + ADP + phosphate + H(+). The catalysed reaction is D-galactose(out) + ATP + H2O = D-galactose(in) + ADP + phosphate + H(+). Functionally, part of an ABC transporter complex involved in carbohydrate import. Could be involved in ribose, galactose and/or methyl galactoside import. Responsible for energy coupling to the transport system. This Agrobacterium fabrum (strain C58 / ATCC 33970) (Agrobacterium tumefaciens (strain C58)) protein is Putative ribose/galactose/methyl galactoside import ATP-binding protein 1.